The chain runs to 229 residues: MSKNSVIIVAAGKGKRMNSSISKQFLQIKNKPILYYTLNKFSTHESIDEIVLVTLEDKIEVCSEIIDKYSINKVSKIVPGGKERQDSVYNGLKAVSKDCEVVLIHDAARPFVTSDIIENGIRYANQYGAAACGIIPKDTIKIKNEKGFAIDTPNREDLFIAQTPQCFNYNIILDCHEKLKKHNKKVTDDTMVLEDYGKSVYLYEGSYSNIKITTPEDLILGEQILEKLT.

It belongs to the IspD/TarI cytidylyltransferase family. IspD subfamily.

It catalyses the reaction 2-C-methyl-D-erythritol 4-phosphate + CTP + H(+) = 4-CDP-2-C-methyl-D-erythritol + diphosphate. It functions in the pathway isoprenoid biosynthesis; isopentenyl diphosphate biosynthesis via DXP pathway; isopentenyl diphosphate from 1-deoxy-D-xylulose 5-phosphate: step 2/6. Its function is as follows. Catalyzes the formation of 4-diphosphocytidyl-2-C-methyl-D-erythritol from CTP and 2-C-methyl-D-erythritol 4-phosphate (MEP). This Clostridium botulinum (strain Loch Maree / Type A3) protein is 2-C-methyl-D-erythritol 4-phosphate cytidylyltransferase.